Here is a 360-residue protein sequence, read N- to C-terminus: Phospho-N-acetylmuramoyl-pentapeptide-transferase (360 aa).

The next 10 helical transmembrane spans lie at 25 to 45 (RGIL…PWLI), 74 to 94 (MGGA…ADLA), 97 to 117 (YVWV…VDDY), 132 to 152 (WKYF…YMTA), 168 to 188 (IEIP…VGSS), 199 to 219 (GLAI…CYLS), 236 to 256 (SGEL…FLWF), 263 to 283 (VFMG…IAVI), 288 to 308 (VVLF…MIQV), and 338 to 358 (VIVR…ATLK).

Belongs to the glycosyltransferase 4 family. MraY subfamily. The cofactor is Mg(2+).

Its subcellular location is the cell inner membrane. It catalyses the reaction UDP-N-acetyl-alpha-D-muramoyl-L-alanyl-gamma-D-glutamyl-meso-2,6-diaminopimeloyl-D-alanyl-D-alanine + di-trans,octa-cis-undecaprenyl phosphate = di-trans,octa-cis-undecaprenyl diphospho-N-acetyl-alpha-D-muramoyl-L-alanyl-D-glutamyl-meso-2,6-diaminopimeloyl-D-alanyl-D-alanine + UMP. Its pathway is cell wall biogenesis; peptidoglycan biosynthesis. In terms of biological role, catalyzes the initial step of the lipid cycle reactions in the biosynthesis of the cell wall peptidoglycan: transfers peptidoglycan precursor phospho-MurNAc-pentapeptide from UDP-MurNAc-pentapeptide onto the lipid carrier undecaprenyl phosphate, yielding undecaprenyl-pyrophosphoryl-MurNAc-pentapeptide, known as lipid I. The protein is Phospho-N-acetylmuramoyl-pentapeptide-transferase of Stutzerimonas stutzeri (strain A1501) (Pseudomonas stutzeri).